The sequence spans 339 residues: Anthranilate phosphoribosyltransferase (339 aa).

5-phospho-alpha-D-ribose 1-diphosphate is bound by residues G82, 85–86 (GD), 92–95 (NIST), 110–118 (KHGNRGISS), and S122. Residue G82 coordinates anthranilate. A Mg(2+)-binding site is contributed by S94. N113 is an anthranilate binding site. R168 contributes to the anthranilate binding site. 2 residues coordinate Mg(2+): D227 and E228.

This sequence belongs to the anthranilate phosphoribosyltransferase family. Homodimer. The cofactor is Mg(2+).

It carries out the reaction N-(5-phospho-beta-D-ribosyl)anthranilate + diphosphate = 5-phospho-alpha-D-ribose 1-diphosphate + anthranilate. It functions in the pathway amino-acid biosynthesis; L-tryptophan biosynthesis; L-tryptophan from chorismate: step 2/5. Functionally, catalyzes the transfer of the phosphoribosyl group of 5-phosphorylribose-1-pyrophosphate (PRPP) to anthranilate to yield N-(5'-phosphoribosyl)-anthranilate (PRA). This is Anthranilate phosphoribosyltransferase from Vesicomyosocius okutanii subsp. Calyptogena okutanii (strain HA).